The sequence spans 105 residues: Insulin-like peptide 7 (105 aa).

The first 18 residues, 1 to 18, serve as a signal peptide directing secretion; that stretch reads MPPIILVFFLVLIPASQQ. Positions 19–57 are excised as a propeptide; it reads YPFSLESLNDQIINEEVIEYMLENSIRSSRTRRVPDEKK. 4 disulfide bridges follow: Cys-61/Cys-90, Cys-73/Cys-103, Cys-77/Cys-104, and Cys-89/Cys-94.

The protein belongs to the insulin family.

It localises to the secreted. Functionally, insulin-like peptide which plays a role in ageing as a consequence of daf-16 activity. The polypeptide is Insulin-like peptide 7 (Caenorhabditis elegans).